A 65-amino-acid polypeptide reads, in one-letter code: Small ribosomal subunit protein bS21 (65 aa).

This sequence belongs to the bacterial ribosomal protein bS21 family.

In Trichlorobacter lovleyi (strain ATCC BAA-1151 / DSM 17278 / SZ) (Geobacter lovleyi), this protein is Small ribosomal subunit protein bS21.